The sequence spans 236 residues: Probable glutathione S-transferase GSTU6 (236 aa).

In terms of domain architecture, GST N-terminal spans glycine 5–alanine 84. Glutathione is bound by residues serine 15, lysine 42, valine 56, and glutamate 68 to serine 69. One can recognise a GST C-terminal domain in the interval aspartate 94–leucine 228.

This sequence belongs to the GST superfamily. Tau family. As to expression, expressed in seedling shoots and roots.

The catalysed reaction is RX + glutathione = an S-substituted glutathione + a halide anion + H(+). Functionally, conjugation of reduced glutathione to a wide number of exogenous and endogenous hydrophobic electrophiles. This is Probable glutathione S-transferase GSTU6 (GSTU6) from Oryza sativa subsp. japonica (Rice).